A 387-amino-acid chain; its full sequence is NifS-like protein (387 aa).

Residues 58–59 (SE) and 184–186 (SIN) contribute to the pyridoxal 5'-phosphate site.

It belongs to the class-V pyridoxal-phosphate-dependent aminotransferase family. NifS/IscS subfamily. Pyridoxal 5'-phosphate serves as cofactor.

It localises to the virion. The chain is NifS-like protein from African swine fever virus (isolate Tick/South Africa/Pretoriuskop Pr4/1996) (ASFV).